The primary structure comprises 284 residues: uncharacterized protein (284 aa).

An AB hydrolase-1 domain is found at 25–123 (PILVMHGGHS…NTLTLQSAVT (99 aa)). Residue Ser-96 is part of the active site.

Belongs to the AB hydrolase superfamily.

This is an uncharacterized protein from Bacillus subtilis (strain 168).